Consider the following 959-residue polypeptide: Translation initiation factor IF-2 (959 aa).

A compositionally biased stretch (basic and acidic residues) spans 1–10; the sequence is MSDKTNDDKT. The disordered stretch occupies residues 1-374; sequence MSDKTNDDKT…SQMQETREKI (374 aa). Polar residues predominate over residues 27-37; the sequence is EQSTVRQNFSH. Composition is skewed to low complexity over residues 63-118 and 128-138; these read AAAA…VTKP and QRPGGQQAQRP. 2 stretches are compositionally biased toward basic and acidic residues: residues 154 to 225 and 232 to 241; these read SEMD…EAAK and ARSERRDDAR. The segment covering 246-284 has biased composition (low complexity); that stretch reads GARPQQAGRPQGGRPQPAGRPQQGSPRPAPIIADAAPIA. Positions 318–333 are enriched in basic and acidic residues; that stretch reads PEVRAPKVVKGEDDRR. The 170-residue stretch at 457–626 folds into the tr-type G domain; the sequence is SRPPVVTIMG…LLQAEMLDLK (170 aa). A G1 region spans residues 466–473; that stretch reads GHVDHGKT. GTP is bound at residue 466–473; the sequence is GHVDHGKT. The tract at residues 491-495 is G2; it reads GITQH. The interval 512–515 is G3; that stretch reads DTPG. Residues 512–516 and 566–569 each bind GTP; these read DTPGH and NKID. Residues 566–569 are G4; that stretch reads NKID. The G5 stretch occupies residues 602-604; sequence SAK.

It belongs to the TRAFAC class translation factor GTPase superfamily. Classic translation factor GTPase family. IF-2 subfamily.

Its subcellular location is the cytoplasm. One of the essential components for the initiation of protein synthesis. Protects formylmethionyl-tRNA from spontaneous hydrolysis and promotes its binding to the 30S ribosomal subunits. Also involved in the hydrolysis of GTP during the formation of the 70S ribosomal complex. This chain is Translation initiation factor IF-2, found in Brucella suis biovar 1 (strain 1330).